The sequence spans 1120 residues: MLQQKFPQAAKSFFTIDSFIKNSKQDFVLVTSNEEEALQLYKQALFFLPSENIYYFPSYDTIPYDHTSPNCNILSKRAETLSKLTTNKGNKLVITHATNLLNKLPPKDFFAKYYLKLFPKMKLSANELSKFLVENSFTRNASTVDVGEFAVRGEIVDLILPESKGYRINFSWDYVESIKQFDIDTQISTRSCNELIISPANEIVLNPETISNFKDNYLRNFGVNHTDNPLYEAITGGRKFSGYEQLLPLFYDSYSGLTDYLNNPVIIFDNLTKQAILEFEHSYNDFYKARLDANKLKFNSFYPTLSPSQLYFTSLEAIELLEQENNILISYENSEQASIVENIAAASFVEKKTIFDKLFEVIKANSRKKIIIGSSVLSSFERVKSIIENYEYSYNEIEYLEEAKTNTINIAILPLNQSFSTPEYLFIAASELLEEKVTPTNTNKKLKNILLELDHLAEGELIVHKDHGIGQFLKLEALEIKGKLHDFLKILYAGNDKLYIPVENIEVIKKYGSDVAQLDKLGSVSWQKNKAKLKNRIKEIALHLMQIAAKRKLNTTAAIEFDLEEYDKFCAKFPFTETEDQLNAINDIREDLSNGMLMDRLICGDVGFGKTEVAMRAAFMVAKSLNENSPQVAVVVPTTILCSQHFARFTERFKDSDLNIKQLSSVVSSKEAKIVRSELESGKINIIIGTHSLLHKVTKFCNLKLLIIDEEQHFGVGQKEFLKSLKSSTHVLAMSATPIPRTLQMSMTGLKELSIIATPPLNRLEVRTSVMPFDPVIIRDALLHEHFRGGKSFFVVPRINDIEDIEKQLKQIVPELSYKVAHGKMSPNKIDEIMSEFYAGKFDILISTTIIESGIDIQDANTMIIHKADMLGLSQLYQLRGRIGRGKMRGYAYLTLPSHKKMTPHSLRRLEIIQNSCALGSGFTIASHDMDLRGFGNLIGEEQSGQIREVGTELYQEMLEEQIAIFKDEPISGEQPFIPTINLGLSVFIPDNYVSDSVLKLGLYRRIGNLNDDLEVEKFKDEMIDRFGSLPTEFNNLLDIVKIKLLCFKLNIENLDSGDNGFVIKFYKNADMADKILKFVSTYTANAKIKPDNKLVFIKKLVGKTIITEANQLLWNLSEI.

Positions 591–756 constitute a Helicase ATP-binding domain; that stretch reads DLSNGMLMDR…MTGLKELSII (166 aa). 604–611 is an ATP binding site; sequence GDVGFGKT. Positions 709–712 match the DEEQ box motif; that stretch reads DEEQ. The region spanning 777-931 is the Helicase C-terminal domain; sequence IIRDALLHEH…GFTIASHDMD (155 aa).

In the N-terminal section; belongs to the UvrB family. It in the C-terminal section; belongs to the helicase family. RecG subfamily.

The protein localises to the cytoplasm. Functionally, couples transcription and DNA repair by recognizing RNA polymerase (RNAP) stalled at DNA lesions. Mediates ATP-dependent release of RNAP and its truncated transcript from the DNA, and recruitment of nucleotide excision repair machinery to the damaged site. In Rickettsia bellii (strain RML369-C), this protein is Transcription-repair-coupling factor.